Here is a 397-residue protein sequence, read N- to C-terminus: Major capsid protein (397 aa).

The segment at 1-24 (MAAPDPYKPGKYNDPAGGVESSIG) is disordered.

Its subcellular location is the virion. Functionally, assembles to form an icosahedral capsid. This is Major capsid protein from Pseudomonas phage KPP21.